Here is a 182-residue protein sequence, read N- to C-terminus: Endoribonuclease YbeY (182 aa).

The Zn(2+) site is built by H115, H119, and H125.

This sequence belongs to the endoribonuclease YbeY family. Zn(2+) is required as a cofactor.

The protein resides in the cytoplasm. Functionally, single strand-specific metallo-endoribonuclease involved in late-stage 70S ribosome quality control and in maturation of the 3' terminus of the 16S rRNA. The polypeptide is Endoribonuclease YbeY (Bifidobacterium longum (strain NCC 2705)).